Consider the following 255-residue polypeptide: Electron transfer flavoprotein subunit beta (255 aa).

An N-acetylalanine modification is found at alanine 2. AMP is bound by residues alanine 9, 39–42, cysteine 66, and 123–134; these read NPFC and GKQAIDDDCNQT. Residues 183-205 are recognition loop; the sequence is ADLRLNEPRYATLPNIMKAKKKK. An N6,N6,N6-trimethyllysine; by ETFBKMT; alternate modification is found at lysine 200. Lysine 200 carries the N6-acetyllysine; alternate modification. Lysine 200 bears the N6-methyllysine; alternate mark. The residue at position 203 (lysine 203) is an N6,N6,N6-trimethyllysine; by ETFBKMT. Lysine 210 bears the N6-acetyllysine; alternate mark. Position 210 is an N6-succinyllysine; alternate (lysine 210). A phosphoserine mark is found at serine 223 and serine 226. Lysine 238 carries the N6-acetyllysine modification. Lysine 248 is modified (N6-acetyllysine; alternate). Lysine 248 is subject to N6-succinyllysine; alternate.

Belongs to the ETF beta-subunit/FixA family. As to quaternary structure, heterodimer composed of ETFA and ETFB. Identified in a complex that contains ETFA, ETFB and ETFRF1. Interacts with ACADM. Methylated. Trimethylation at Lys-200 and Lys-203 may negatively regulate the activity in electron transfer from acyl-CoA dehydrogenases.

It localises to the mitochondrion matrix. Its function is as follows. Heterodimeric electron transfer flavoprotein that accepts electrons from several mitochondrial dehydrogenases, including acyl-CoA dehydrogenases, glutaryl-CoA and sarcosine dehydrogenase. It transfers the electrons to the main mitochondrial respiratory chain via ETF-ubiquinone oxidoreductase. Required for normal mitochondrial fatty acid oxidation and normal amino acid metabolism. ETFB binds an AMP molecule that probably has a purely structural role. The protein is Electron transfer flavoprotein subunit beta of Sus scrofa (Pig).